Reading from the N-terminus, the 258-residue chain is Hydroxypyruvate isomerase (258 aa).

Residues E143 and E240 each act as proton donor/acceptor in the active site.

The protein belongs to the hyi family. Homodimer.

It carries out the reaction 3-hydroxypyruvate = 2-hydroxy-3-oxopropanoate. Not stimulated by addition of pyridoxal 5'-phosphate (0.1 mM), FAD, NAD(+), NADP(+) or ATP (1 mM each). EDTA (10 mM) and metal ions (1 mM) such as Ca(2+), Co(2+), Mg(2+), Ni(2+), Zn(2+) do not affect the enzyme activity. Functionally, catalyzes the reversible isomerization between hydroxypyruvate and 2-hydroxy-3-oxopropanoate (also termed tartronate semialdehyde). Does not catalyze the isomerization of D-fructose to D-glucose or that of D-xylulose to D-xylose. Also does not catalyze racemization of serine, alanine, glycerate or lactate. The polypeptide is Hydroxypyruvate isomerase (hyi) (Escherichia coli (strain K12)).